Consider the following 105-residue polypeptide: Small ribosomal subunit protein eS24 (105 aa).

A disordered region spans residues 85–105; the sequence is SVIAKNEEPEEEPEEEAEDAE. Over residues 92–105 the composition is skewed to acidic residues; it reads EPEEEPEEEAEDAE.

The protein belongs to the eukaryotic ribosomal protein eS24 family.

The polypeptide is Small ribosomal subunit protein eS24 (Methanosphaera stadtmanae (strain ATCC 43021 / DSM 3091 / JCM 11832 / MCB-3)).